A 354-amino-acid polypeptide reads, in one-letter code: Histidinol-phosphate aminotransferase (354 aa).

An N6-(pyridoxal phosphate)lysine modification is found at lysine 210.

Belongs to the class-II pyridoxal-phosphate-dependent aminotransferase family. Histidinol-phosphate aminotransferase subfamily. As to quaternary structure, homodimer. Pyridoxal 5'-phosphate is required as a cofactor.

It catalyses the reaction L-histidinol phosphate + 2-oxoglutarate = 3-(imidazol-4-yl)-2-oxopropyl phosphate + L-glutamate. The protein operates within amino-acid biosynthesis; L-histidine biosynthesis; L-histidine from 5-phospho-alpha-D-ribose 1-diphosphate: step 7/9. The polypeptide is Histidinol-phosphate aminotransferase (Clostridium botulinum (strain Langeland / NCTC 10281 / Type F)).